We begin with the raw amino-acid sequence, 240 residues long: UDP-2,3-diacylglucosamine hydrolase (240 aa).

Positions 8, 10, 41, 79, and 114 each coordinate Mn(2+). 79 to 80 (NR) is a substrate binding site. 5 residues coordinate substrate: Asp122, Ser160, Asn164, Lys167, and His195. Residues His195 and His197 each contribute to the Mn(2+) site.

The protein belongs to the LpxH family. The cofactor is Mn(2+).

Its subcellular location is the cell inner membrane. The enzyme catalyses UDP-2-N,3-O-bis[(3R)-3-hydroxytetradecanoyl]-alpha-D-glucosamine + H2O = 2-N,3-O-bis[(3R)-3-hydroxytetradecanoyl]-alpha-D-glucosaminyl 1-phosphate + UMP + 2 H(+). Its pathway is glycolipid biosynthesis; lipid IV(A) biosynthesis; lipid IV(A) from (3R)-3-hydroxytetradecanoyl-[acyl-carrier-protein] and UDP-N-acetyl-alpha-D-glucosamine: step 4/6. Hydrolyzes the pyrophosphate bond of UDP-2,3-diacylglucosamine to yield 2,3-diacylglucosamine 1-phosphate (lipid X) and UMP by catalyzing the attack of water at the alpha-P atom. Involved in the biosynthesis of lipid A, a phosphorylated glycolipid that anchors the lipopolysaccharide to the outer membrane of the cell. In Escherichia coli (strain UTI89 / UPEC), this protein is UDP-2,3-diacylglucosamine hydrolase.